The chain runs to 172 residues: uncharacterized protein (172 aa).

Transmembrane regions (helical) follow at residues 44–68 (VLVSSVLGALKVILIPCASTYAALT), 86–110 (LASYAMAWLLNILTIAVIIGLVFSL), and 117–135 (VVFISLGLLMSVTTSVTLF).

This sequence belongs to the chlamydial CPn_0442/CT_006/TC_0274 family.

The protein resides in the cell membrane. This is an uncharacterized protein from Chlamydia pneumoniae (Chlamydophila pneumoniae).